The following is a 215-amino-acid chain: E3 ubiquitin-protein ligase znrf1 (215 aa).

Disordered regions lie at residues 1–39 (MGGK…PGGT) and 66–96 (YTPR…ETGG). G2 carries N-myristoyl glycine lipidation. The RING-type; atypical zinc-finger motif lies at 172–213 (CVICLEELQQGDTIARLPCLCIYHKSCIDSWFEINRSCPEHP).

The protein resides in the endosome. Its subcellular location is the lysosome. It localises to the membrane. It carries out the reaction S-ubiquitinyl-[E2 ubiquitin-conjugating enzyme]-L-cysteine + [acceptor protein]-L-lysine = [E2 ubiquitin-conjugating enzyme]-L-cysteine + N(6)-ubiquitinyl-[acceptor protein]-L-lysine.. Its pathway is protein modification; protein ubiquitination. In terms of biological role, E3 ubiquitin-protein ligase that plays a role in neuron cells differentiation. Plays a role in the establishment and maintenance of neuronal transmission and plasticity. The sequence is that of E3 ubiquitin-protein ligase znrf1 (znrf1) from Danio rerio (Zebrafish).